A 229-amino-acid chain; its full sequence is Ribonuclease 3 (229 aa).

The RNase III domain maps to 4–133 (WEELQESVGF…FIGALYLDNG (130 aa)). Glu46 lines the Mg(2+) pocket. Residue Asp50 is part of the active site. 2 residues coordinate Mg(2+): Asp119 and Glu122. Glu122 is a catalytic residue. The region spanning 159-228 (DYKTQLQEIV…AQFAINKLIH (70 aa)) is the DRBM domain.

The protein belongs to the ribonuclease III family. In terms of assembly, homodimer. It depends on Mg(2+) as a cofactor.

It localises to the cytoplasm. It carries out the reaction Endonucleolytic cleavage to 5'-phosphomonoester.. Functionally, digests double-stranded RNA. Involved in the processing of primary rRNA transcript to yield the immediate precursors to the large and small rRNAs (23S and 16S). Processes some mRNAs, and tRNAs when they are encoded in the rRNA operon. Processes pre-crRNA and tracrRNA of type II CRISPR loci if present in the organism. This chain is Ribonuclease 3, found in Listeria monocytogenes serovar 1/2a (strain ATCC BAA-679 / EGD-e).